The chain runs to 315 residues: MKRKIVILLGPTGVGKTELSIKIAKLLNAEIISSDSMQIYKYMDIGTAKPTLEQRKEVIHHMIDIVNPWDYFSTGAYIEIVKEVIEKIFEREKIPLVVGGTGLYLRAMTEGIFEGPDADWNLRMELMNKERDNPGFLYNLLKEIDPIKADKIYPSDLRRILRALEVFFKEKKQISELQEKLTKPLSYNFIKIGVTRERKELYRIIEERVDKMICSGLIEEVRNVLTLIKRNATSLSPLPALQAIGYKEIAGCLADLYSIDEAVRLIKKRTKMYAKRQFTWFRKEKDIMWFDISGRHDFEIIAEQIYSALSEILHK.

10–17 (GPTGVGKT) contributes to the ATP binding site. 12 to 17 (TGVGKT) lines the substrate pocket. An interaction with substrate tRNA region spans residues 35-38 (DSMQ).

Belongs to the IPP transferase family. Monomer. Mg(2+) serves as cofactor.

The catalysed reaction is adenosine(37) in tRNA + dimethylallyl diphosphate = N(6)-dimethylallyladenosine(37) in tRNA + diphosphate. In terms of biological role, catalyzes the transfer of a dimethylallyl group onto the adenine at position 37 in tRNAs that read codons beginning with uridine, leading to the formation of N6-(dimethylallyl)adenosine (i(6)A). The chain is tRNA dimethylallyltransferase from Thermodesulfovibrio yellowstonii (strain ATCC 51303 / DSM 11347 / YP87).